We begin with the raw amino-acid sequence, 274 residues long: NAD-dependent protein deacetylase (274 aa).

The Deacetylase sirtuin-type domain maps to 1–274 (MDSRMSDLQA…CDEVLAEVVP (274 aa)). Residues 26–46 (GAGC…GQWK) and 104–107 (QNVD) contribute to the NAD(+) site. The active-site Proton acceptor is the histidine 122. 4 residues coordinate Zn(2+): cysteine 130, cysteine 133, cysteine 181, and cysteine 184. NAD(+)-binding positions include 221-223 (GSS), 247-249 (NLG), and cysteine 265.

Belongs to the sirtuin family. Class II subfamily. It depends on Zn(2+) as a cofactor.

It localises to the cytoplasm. It catalyses the reaction N(6)-acetyl-L-lysyl-[protein] + NAD(+) + H2O = 2''-O-acetyl-ADP-D-ribose + nicotinamide + L-lysyl-[protein]. In terms of biological role, NAD-dependent protein deacetylase which modulates the activities of several enzymes which are inactive in their acetylated form. The chain is NAD-dependent protein deacetylase from Bordetella pertussis (strain Tohama I / ATCC BAA-589 / NCTC 13251).